Here is a 173-residue protein sequence, read N- to C-terminus: SKP1-like protein 1 (173 aa).

Residues 115 to 173 (ILAANYLNIKGLLDLTCQTVADMIKGKTPEEIRKTFNIKNDFTPEEEEEIRRENQWAFE) are interaction with the F-box domain of F-box proteins.

This sequence belongs to the SKP1 family. Part of a SCF (SKP1-CUL1-F-box protein) E3 ubiquitin-protein ligase complex. Interacts directly with MOF (via F-box domain). Interacts with rice black streaked dwarf virus RBSDV protein P7-2. Is able to form the SCF complex together with CUL1 and the viral P7-2 protein. Interacts with D3.

The protein resides in the nucleus. It functions in the pathway protein modification; protein ubiquitination. In terms of biological role, involved in ubiquitination and subsequent proteasomal degradation of target proteins. Together with CUL1, a RING-box and a F-box protein, it forms a SCF E3 ubiquitin ligase complex. The functional specificity of this complex depends on the type of F-box protein. In the SCF complex, it serves as an adapter that links the F-box protein to CUL1. This chain is SKP1-like protein 1, found in Oryza sativa subsp. japonica (Rice).